Here is a 134-residue protein sequence, read N- to C-terminus: Small ribosomal subunit protein uS8c (134 aa).

It belongs to the universal ribosomal protein uS8 family. As to quaternary structure, part of the 30S ribosomal subunit.

The protein localises to the plastid. It localises to the chloroplast. One of the primary rRNA binding proteins, it binds directly to 16S rRNA central domain where it helps coordinate assembly of the platform of the 30S subunit. In Daucus carota (Wild carrot), this protein is Small ribosomal subunit protein uS8c (rps8).